Consider the following 502-residue polypeptide: Beta-glucosidase 7 (502 aa).

The first 22 residues, 1–22 (MKPFSQFFVFVVTVSATSYIDA), serve as a signal peptide directing secretion. A beta-D-glucoside contacts are provided by residues Gln-42, His-140, and 185–186 (NE). Residue Glu-186 is the Proton donor of the active site. N-linked (GlcNAc...) asparagine glycosylation is present at Asn-208. Tyr-325 is an a beta-D-glucoside binding site. N-linked (GlcNAc...) asparagine glycosylation is present at Asn-359. Glu-392 serves as a coordination point for a beta-D-glucoside. Glu-392 acts as the Nucleophile in catalysis. The N-linked (GlcNAc...) asparagine glycan is linked to Asn-425. 2 residues coordinate a beta-D-glucoside: Trp-435 and Tyr-451. N-linked (GlcNAc...) asparagine glycans are attached at residues Asn-457 and Asn-479.

The protein belongs to the glycosyl hydrolase 1 family.

It carries out the reaction Hydrolysis of terminal, non-reducing beta-D-glucosyl residues with release of beta-D-glucose.. In Arabidopsis thaliana (Mouse-ear cress), this protein is Beta-glucosidase 7.